Here is a 289-residue protein sequence, read N- to C-terminus: tRNA pseudouridine synthase A (289 aa).

Catalysis depends on Asp-53, which acts as the Nucleophile. Tyr-119 serves as a coordination point for substrate.

This sequence belongs to the tRNA pseudouridine synthase TruA family. Homodimer.

It catalyses the reaction uridine(38/39/40) in tRNA = pseudouridine(38/39/40) in tRNA. Its function is as follows. Formation of pseudouridine at positions 38, 39 and 40 in the anticodon stem and loop of transfer RNAs. This is tRNA pseudouridine synthase A from Corynebacterium glutamicum (strain ATCC 13032 / DSM 20300 / JCM 1318 / BCRC 11384 / CCUG 27702 / LMG 3730 / NBRC 12168 / NCIMB 10025 / NRRL B-2784 / 534).